A 150-amino-acid chain; its full sequence is Large ribosomal subunit protein uL13 (150 aa).

Belongs to the universal ribosomal protein uL13 family. Part of the 50S ribosomal subunit.

Its function is as follows. This protein is one of the early assembly proteins of the 50S ribosomal subunit, although it is not seen to bind rRNA by itself. It is important during the early stages of 50S assembly. In Chlamydia abortus (strain DSM 27085 / S26/3) (Chlamydophila abortus), this protein is Large ribosomal subunit protein uL13.